Reading from the N-terminus, the 97-residue chain is Aspartyl/glutamyl-tRNA(Asn/Gln) amidotransferase subunit C (97 aa).

This sequence belongs to the GatC family. As to quaternary structure, heterotrimer of A, B and C subunits.

The catalysed reaction is L-glutamyl-tRNA(Gln) + L-glutamine + ATP + H2O = L-glutaminyl-tRNA(Gln) + L-glutamate + ADP + phosphate + H(+). It catalyses the reaction L-aspartyl-tRNA(Asn) + L-glutamine + ATP + H2O = L-asparaginyl-tRNA(Asn) + L-glutamate + ADP + phosphate + 2 H(+). Functionally, allows the formation of correctly charged Asn-tRNA(Asn) or Gln-tRNA(Gln) through the transamidation of misacylated Asp-tRNA(Asn) or Glu-tRNA(Gln) in organisms which lack either or both of asparaginyl-tRNA or glutaminyl-tRNA synthetases. The reaction takes place in the presence of glutamine and ATP through an activated phospho-Asp-tRNA(Asn) or phospho-Glu-tRNA(Gln). This chain is Aspartyl/glutamyl-tRNA(Asn/Gln) amidotransferase subunit C, found in Synechococcus sp. (strain JA-3-3Ab) (Cyanobacteria bacterium Yellowstone A-Prime).